The sequence spans 447 residues: MTKVITRFAPSPTGMLHVGNIRAALLNWLYAKKHNGQFILRFDDTDLERSKQEYKDAIEEDLKFLNINWDQTFNQLSRLSRYDAIKNLLLDKKRLYACYETPEELELKRKFQLSKGLPPIYDRASLNLTEEQAKKYIEQGRKPHYRFLVNHEPISWHDMIKGEVKYDGKALSDPIVIRADGSMTYMLCSVIDDIDYDITHIIRGEDHVSNTAIQMQMFEALNTTPPTFGHLSLIINKDEKISKRVGGFEIATLRKEIGIEAMAIASFFSLLGSSAQILPYKSMEKLANQFEISSFSKSPTIYQPEDLERLNHKLLISLDFDTVKERLKEIDAEYIDENFWLSVSPNLQKLRDVKDWWEICHQTPNVENLNLDKEYLKQAAELLPKGEITKDSWSIWTKEITNITGRKGKELFLPLRLALTARESGPEIASVLPLIDREEIIKRLTSA.

The 'HIGH' region signature appears at Pro10–Asn20. Positions Lys240–Arg244 match the 'KMSKS' region motif. Residue Lys243 participates in ATP binding.

Belongs to the class-I aminoacyl-tRNA synthetase family. Glutamate--tRNA ligase type 1 subfamily. As to quaternary structure, monomer.

The protein resides in the cytoplasm. It carries out the reaction tRNA(Glu) + L-glutamate + ATP = L-glutamyl-tRNA(Glu) + AMP + diphosphate. Its function is as follows. Catalyzes the attachment of glutamate to tRNA(Glu) in a two-step reaction: glutamate is first activated by ATP to form Glu-AMP and then transferred to the acceptor end of tRNA(Glu). The sequence is that of Glutamate--tRNA ligase 1 from Rickettsia rickettsii (strain Sheila Smith).